The sequence spans 163 residues: tRNA-acetylating toxin 2 (163 aa).

Tyr137 is an active-site residue.

This sequence belongs to the acetyltransferase family. GNAT subfamily. As to quaternary structure, homodimer. Forms a complex with cognate antitoxin TacA2.

The enzyme catalyses glycyl-tRNA(Gly) + acetyl-CoA = N-acetylglycyl-tRNA(Gly) + CoA + H(+). It catalyses the reaction L-isoleucyl-tRNA(Ile) + acetyl-CoA = N-acetyl-L-isoleucyl-tRNA(Ile) + CoA + H(+). It carries out the reaction L-leucyl-tRNA(Leu) + acetyl-CoA = N-acetyl-L-leucyl-tRNA(Leu) + CoA + H(+). In terms of biological role, toxic component of a type II toxin-antitoxin (TA) system. Acetylates tRNA and inhibits translation. Acetylates mainly Gly and Ile/Leu in vitro. Overexpression during the lag phase of a tacA2-tacT2 deletion strain leads to a 100-fold increase in persister cells in the presence of cefotaxime and a non-growth state in the absence of antibiotic. This protein, which has a single amino acid compared to S.typhimurium strain 14028s (Lys-29 is Glu in 14028s), produces 100-fold more persister cells, has much higher acetylation activity and binds tRNA much better. Persister cell formation and the growth defect are neutralized by cognate antitoxin TacA2. Its function is as follows. The TacA2-TacT2 complex both represses and derepresses expression of its own operon. In Salmonella enteritidis, this protein is tRNA-acetylating toxin 2.